The chain runs to 105 residues: MDATKIKFDVILLSFLLIISGIPSNLGLSTSVRGTTRSEPEAFHGGKFPAMKMRKLMAPNMEVDYSSDYYDGGSSSSTTSPSPPVPDYDDIYRRQGDVPSPGIGH.

The N-terminal stretch at M1–S29 is a signal peptide. The propeptide occupies T30–D90. Positions D68–S80 are enriched in low complexity. The interval D68–H105 is disordered. 2 positions are modified to hydroxyproline: P99 and P101.

Belongs to the C-terminally encoded plant signaling peptide (CEP) family. As to quaternary structure, interacts with CEP receptors (e.g. CEPR1 and CEPR2). In terms of processing, the mature small signaling peptide is generated by proteolytic processing of the longer precursor.

Its subcellular location is the secreted. The protein localises to the extracellular space. The protein resides in the apoplast. Functionally, extracellular signaling peptide that may regulate primary root growth rate and systemic nitrogen (N)-demand signaling. The sequence is that of Precursor of CEP15 from Arabidopsis thaliana (Mouse-ear cress).